The chain runs to 254 residues: uncharacterized protein (254 aa).

It belongs to the MtxX family.

This is an uncharacterized protein from Methanopyrus kandleri (strain AV19 / DSM 6324 / JCM 9639 / NBRC 100938).